Here is a 421-residue protein sequence, read N- to C-terminus: ATP-dependent RNA helicase RhlB (421 aa).

Residues 9–37 carry the Q motif motif; sequence QKFSDFALHPQVVEALEKKGFYNCTPIQA. A Helicase ATP-binding domain is found at 40–219; it reads LPLTLAGRDV…FEQMNNAEYV (180 aa). ATP is bound at residue 53–60; the sequence is AQTGTGKT. Residues 165–168 carry the DEAD box motif; it reads DEAD. The Helicase C-terminal domain maps to 245–390; the sequence is RLLQTLIEEE…VSKYNPEALM (146 aa). Residues 396–421 are disordered; it reads PLRLTRSRPGNGPRRAGAPRNRRRSG. Low complexity predominate over residues 402-414; it reads SRPGNGPRRAGAP.

This sequence belongs to the DEAD box helicase family. RhlB subfamily. Component of the RNA degradosome, which is a multiprotein complex involved in RNA processing and mRNA degradation.

Its subcellular location is the cytoplasm. The enzyme catalyses ATP + H2O = ADP + phosphate + H(+). DEAD-box RNA helicase involved in RNA degradation. Has RNA-dependent ATPase activity and unwinds double-stranded RNA. This chain is ATP-dependent RNA helicase RhlB, found in Salmonella arizonae (strain ATCC BAA-731 / CDC346-86 / RSK2980).